Consider the following 293-residue polypeptide: Ribosomal RNA small subunit methyltransferase A (293 aa).

S-adenosyl-L-methionine-binding residues include N38, V40, G65, E86, D116, and N133.

Belongs to the class I-like SAM-binding methyltransferase superfamily. rRNA adenine N(6)-methyltransferase family. RsmA subfamily.

The protein resides in the cytoplasm. It carries out the reaction adenosine(1518)/adenosine(1519) in 16S rRNA + 4 S-adenosyl-L-methionine = N(6)-dimethyladenosine(1518)/N(6)-dimethyladenosine(1519) in 16S rRNA + 4 S-adenosyl-L-homocysteine + 4 H(+). In terms of biological role, specifically dimethylates two adjacent adenosines (A1518 and A1519) in the loop of a conserved hairpin near the 3'-end of 16S rRNA in the 30S particle. May play a critical role in biogenesis of 30S subunits. This Paenarthrobacter aurescens (strain TC1) protein is Ribosomal RNA small subunit methyltransferase A.